Reading from the N-terminus, the 314-residue chain is Ribosomal protein L11 methyltransferase (314 aa).

S-adenosyl-L-methionine contacts are provided by T161, G182, D204, and N248.

This sequence belongs to the methyltransferase superfamily. PrmA family.

The protein resides in the cytoplasm. The catalysed reaction is L-lysyl-[protein] + 3 S-adenosyl-L-methionine = N(6),N(6),N(6)-trimethyl-L-lysyl-[protein] + 3 S-adenosyl-L-homocysteine + 3 H(+). Methylates ribosomal protein L11. This chain is Ribosomal protein L11 methyltransferase, found in Listeria monocytogenes serotype 4b (strain CLIP80459).